The sequence spans 346 residues: Histidinol-phosphate aminotransferase (346 aa).

Lys209 carries the post-translational modification N6-(pyridoxal phosphate)lysine.

It belongs to the class-II pyridoxal-phosphate-dependent aminotransferase family. Histidinol-phosphate aminotransferase subfamily. As to quaternary structure, homodimer. Pyridoxal 5'-phosphate serves as cofactor.

It carries out the reaction L-histidinol phosphate + 2-oxoglutarate = 3-(imidazol-4-yl)-2-oxopropyl phosphate + L-glutamate. It functions in the pathway amino-acid biosynthesis; L-histidine biosynthesis; L-histidine from 5-phospho-alpha-D-ribose 1-diphosphate: step 7/9. This chain is Histidinol-phosphate aminotransferase, found in Vibrio vulnificus (strain CMCP6).